A 318-amino-acid chain; its full sequence is Mechanosensory protein 3 (318 aa).

2 LIM zinc-binding domains span residues 27–86 (NKCY…DYSA) and 87–152 (HRCA…PMDD). The homeobox DNA-binding region spans 214 to 273 (RRGPRTTIRQNQLDVLNEMFSNTPKPSKHARAKLALETGLSMRVIQVWFQNRRSKERRLK).

Its subcellular location is the nucleus. Its function is as follows. Specifies differentiation of the set of six touch receptor neurons. Binds cooperatively as a heterodimer with unc-86 to sites in the mec-3 gene promoter. The polypeptide is Mechanosensory protein 3 (mec-3) (Caenorhabditis briggsae).